The following is a 225-amino-acid chain: Transmembrane emp24 domain-containing protein p24delta11 (225 aa).

Residues 1-35 form the signal peptide; that stretch reads MDLLPSRYKIHKTKLRWILTMMTMMMMMVMRRGES. Over 36–193 the chain is Lumenal; that stretch reads MRLDMESGNT…ELNRSTNSRM (158 aa). The region spanning 45–160 is the GOLD domain; sequence TKCISDDIKT…ITMLEVEVRK (116 aa). Residues 175-188 are a coiled coil; it reads LIEREREMQELNRS. Arginine 178 carries the post-translational modification Omega-N-methylated arginine. N-linked (GlcNAc...) asparagine glycosylation occurs at asparagine 186. The helical transmembrane segment at 194-210 threads the bilayer; sequence AALSLLSFVVTMSVAGL. The Cytoplasmic segment spans residues 211-225; sequence QLRHLKSFLERKKLL. Positions 218–219 match the COPII vesicle coat-binding motif; the sequence is FL. The COPI vesicle coat-binding motif lies at 218-225; the sequence is FLERKKLL.

Belongs to the EMP24/GP25L family. As to quaternary structure, probably oligomerizes with other members of the EMP24/GP25L family. Associates with the COPI vesicle coat (coatomer). Associates with the COPII vesicle coat (coatomer).

It is found in the endoplasmic reticulum membrane. It localises to the golgi apparatus. Its subcellular location is the cis-Golgi network membrane. The protein resides in the golgi stack membrane. Its function is as follows. Involved in vesicular protein trafficking. Mainly functions in the early secretory pathway. Thought to act as cargo receptor at the lumenal side for incorporation of secretory cargo molecules into transport vesicles and to be involved in vesicle coat formation at the cytoplasmic side. The protein is Transmembrane emp24 domain-containing protein p24delta11 of Arabidopsis thaliana (Mouse-ear cress).